We begin with the raw amino-acid sequence, 67 residues long: UPF0437 protein y4xE (67 aa).

It belongs to the UPF0437 family.

The sequence is that of UPF0437 protein y4xE from Sinorhizobium fredii (strain NBRC 101917 / NGR234).